Here is a 695-residue protein sequence, read N- to C-terminus: Elongation factor G (695 aa).

In terms of domain architecture, tr-type G spans Glu8–Thr282. Residues Ala17 to Thr24, Asp81 to His85, and Asn135 to Asp138 each bind GTP.

It belongs to the TRAFAC class translation factor GTPase superfamily. Classic translation factor GTPase family. EF-G/EF-2 subfamily.

The protein resides in the cytoplasm. Functionally, catalyzes the GTP-dependent ribosomal translocation step during translation elongation. During this step, the ribosome changes from the pre-translocational (PRE) to the post-translocational (POST) state as the newly formed A-site-bound peptidyl-tRNA and P-site-bound deacylated tRNA move to the P and E sites, respectively. Catalyzes the coordinated movement of the two tRNA molecules, the mRNA and conformational changes in the ribosome. This is Elongation factor G from Listeria innocua serovar 6a (strain ATCC BAA-680 / CLIP 11262).